The chain runs to 373 residues: Phospho-N-acetylmuramoyl-pentapeptide-transferase (373 aa).

The next 11 membrane-spanning stretches (helical) occupy residues 16–36 (WWTKGSTSASLLGIVIFAASF), 46–66 (LLSLPLMISTLISVLIASWGI), 93–113 (PTMGGLLVVPVGLIIGSFVSV), 120–140 (QLLALSWITLAYMLIGGFDDW), 157–177 (LLLQTAASLIFLAWAGWQHWI), 185–205 (LGISIQMGFMIWPLALFVFLA), 216–236 (LDGLASGCGALVFTGLAVQLM), 242–262 (GNPVLAGFCMAMAGAWLGFLM), 270–290 (VFMGDTGSLAMGAALSGVAIL), 298–318 (LVMGGVFLAESLSVIIQVWVF), and 350–369 (MVVRRFWLSTGGLVLLGLLL).

Belongs to the glycosyltransferase 4 family. MraY subfamily. The cofactor is Mg(2+).

The protein resides in the cell inner membrane. The enzyme catalyses UDP-N-acetyl-alpha-D-muramoyl-L-alanyl-gamma-D-glutamyl-meso-2,6-diaminopimeloyl-D-alanyl-D-alanine + di-trans,octa-cis-undecaprenyl phosphate = di-trans,octa-cis-undecaprenyl diphospho-N-acetyl-alpha-D-muramoyl-L-alanyl-D-glutamyl-meso-2,6-diaminopimeloyl-D-alanyl-D-alanine + UMP. Its pathway is cell wall biogenesis; peptidoglycan biosynthesis. In terms of biological role, catalyzes the initial step of the lipid cycle reactions in the biosynthesis of the cell wall peptidoglycan: transfers peptidoglycan precursor phospho-MurNAc-pentapeptide from UDP-MurNAc-pentapeptide onto the lipid carrier undecaprenyl phosphate, yielding undecaprenyl-pyrophosphoryl-MurNAc-pentapeptide, known as lipid I. In Prochlorococcus marinus (strain MIT 9313), this protein is Phospho-N-acetylmuramoyl-pentapeptide-transferase.